Here is a 205-residue protein sequence, read N- to C-terminus: Isochorismatase domain-containing protein 2 (205 aa).

Ser-7 and Ser-202 each carry phosphoserine.

The protein belongs to the isochorismatase family. As to quaternary structure, interacts with CDKN2A.

The protein localises to the cytoplasm. Its subcellular location is the nucleus. In Pongo abelii (Sumatran orangutan), this protein is Isochorismatase domain-containing protein 2 (ISOC2).